Consider the following 285-residue polypeptide: N(G),N(G)-dimethylarginine dimethylaminohydrolase 1 (285 aa).

Position 2 is an N-acetylalanine (Ala-2). Substrate contacts are provided by residues Leu-30, Asp-73, 78–79 (ED), Arg-98, and Arg-145. The Proton donor role is filled by His-173. Cys-222 bears the S-nitrosocysteine mark. Val-268 serves as a coordination point for substrate. Cys-274 carries the post-translational modification S-nitrosocysteine. Cys-274 serves as the catalytic Nucleophile. Cys-274 provides a ligand contact to Zn(2+).

The protein belongs to the DDAH family. In terms of assembly, monomer. As to expression, detected in brain, liver, kidney and pancreas, and at low levels in skeletal muscle.

It catalyses the reaction N(omega),N(omega)-dimethyl-L-arginine + H2O = dimethylamine + L-citrulline. The enzyme catalyses N(omega)-methyl-L-arginine + H2O = L-citrulline + methylamine. Inhibited by zinc ions. Enzyme purified in the absence of 1,10-phenanthroline contains on average 0.4 zinc atoms per subunit. Inhibited by 4-hydroxy-nonenal through the formation of a covalent adduct with His-173. Competitively inhibited by N(5)-iminopropyl-ornithine. Hydrolyzes N(G),N(G)-dimethyl-L-arginine (ADMA) and N(G)-monomethyl-L-arginine (MMA) which act as inhibitors of NOS. Has therefore a role in the regulation of nitric oxide generation. This Homo sapiens (Human) protein is N(G),N(G)-dimethylarginine dimethylaminohydrolase 1.